The primary structure comprises 442 residues: D-serine dehydratase (442 aa).

N6-(pyridoxal phosphate)lysine is present on Lys118.

Belongs to the serine/threonine dehydratase family. DsdA subfamily. Monomer. Requires pyridoxal 5'-phosphate as cofactor.

It catalyses the reaction D-serine = pyruvate + NH4(+). This Escherichia fergusonii (strain ATCC 35469 / DSM 13698 / CCUG 18766 / IAM 14443 / JCM 21226 / LMG 7866 / NBRC 102419 / NCTC 12128 / CDC 0568-73) protein is D-serine dehydratase.